Here is a 780-residue protein sequence, read N- to C-terminus: TSC22 domain family protein 2 (780 aa).

Disordered stretches follow at residues 20–86 (AQVA…TVSP), 126–158 (TSAPAPGAPGGPQLAGSSAGPVTAAPSQPPTTC), 235–499 (AHGP…PGGP), 587–607 (LVGQVDDTRRKSEPLPQPPLS), and 736–780 (LSSN…VSSA). Residues 28–37 (EDTESLDDPD) show a composition bias toward acidic residues. Residues 126 to 146 (TSAPAPGAPGGPQLAGSSAGP) are compositionally biased toward low complexity. Over residues 241–262 (GTDSSLTAVSQLPPSEKMSQPT) the composition is skewed to polar residues. Low complexity-rich tracts occupy residues 297-316 (GAATGPQPMMAAAQPSQPQG), 344-361 (PAVGAPAAQQPQQFAYPQ), and 395-412 (QPSSTGAAASPATAATLP). Residues 415–434 (TGQNASSVGAQLMGASSQPS) are compositionally biased toward polar residues. Low complexity predominate over residues 453-468 (QPTGVPPATVGGVVQP). A compositionally biased stretch (polar residues) spans 736–756 (LSSNDQLSQLPTQQANPGSTS). Over residues 765-774 (PPQPTQPPQQ) the composition is skewed to pro residues.

This sequence belongs to the TSC-22/Dip/Bun family. In terms of assembly, interacts with NRBP1. Interacts with PKM isoform M2; the interaction results in reduced nuclear levels of PKM isoform M2, leading to repression of cyclin CCND1 transcription and reduced cell growth. Interacts with WDR77.

In terms of biological role, reduces the level of nuclear PKM isoform M2 which results in repression of cyclin CCND1 transcription and reduced cell growth. This chain is TSC22 domain family protein 2, found in Homo sapiens (Human).